Consider the following 317-residue polypeptide: Serpentine receptor class delta-26 (317 aa).

Helical transmembrane passes span 5-25 (LLHTVLSVTGVTLNAFMMYLA), 38-58 (AIITIKTFTDILTSAMSFFVM), 83-103 (ACYVGHMFMLCFLECNLIWMI), 122-142 (SLVFVALCLSIPSFIHMAAWI), 176-196 (ITLILQLFITSVLVLIAYAWI), 227-247 (FQVFLPTFIFLGFFIFAAMFG), and 258-278 (LVSIAFMFSPICSPFSYILFV).

The protein belongs to the nematode receptor-like protein srd family.

It localises to the membrane. This chain is Serpentine receptor class delta-26 (srd-26), found in Caenorhabditis elegans.